Here is a 203-residue protein sequence, read N- to C-terminus: FMN-dependent NADH:quinone oxidoreductase 3 (203 aa).

FMN is bound by residues serine 9, 15–17 (SAS), 95–98 (MYNF), and 139–142 (TAGG).

It belongs to the azoreductase type 1 family. In terms of assembly, homodimer. FMN serves as cofactor.

It catalyses the reaction 2 a quinone + NADH + H(+) = 2 a 1,4-benzosemiquinone + NAD(+). The enzyme catalyses N,N-dimethyl-1,4-phenylenediamine + anthranilate + 2 NAD(+) = 2-(4-dimethylaminophenyl)diazenylbenzoate + 2 NADH + 2 H(+). In terms of biological role, quinone reductase that provides resistance to thiol-specific stress caused by electrophilic quinones. Also exhibits azoreductase activity. Catalyzes the reductive cleavage of the azo bond in aromatic azo compounds to the corresponding amines. In Pseudomonas fluorescens (strain Pf0-1), this protein is FMN-dependent NADH:quinone oxidoreductase 3.